We begin with the raw amino-acid sequence, 729 residues long: Fatty acid oxidation complex subunit alpha (729 aa).

The enoyl-CoA hydratase/isomerase stretch occupies residues 1-189 (MLYKGDTLYL…KIGLVDGVVK (189 aa)). Residue Asp-296 participates in substrate binding. Residues 311-729 (ETPKQAAVLG…ARPVGDLKTA (419 aa)) form a 3-hydroxyacyl-CoA dehydrogenase region. Residues Met-324, Asp-343, 400–402 (VVE), Lys-407, and Ser-429 each bind NAD(+). The active-site For 3-hydroxyacyl-CoA dehydrogenase activity is His-450. An NAD(+)-binding site is contributed by Asn-453. Asn-500 and Tyr-660 together coordinate substrate. A disordered region spans residues 708 to 729 (RHNEPYYPPVEPARPVGDLKTA).

The protein in the N-terminal section; belongs to the enoyl-CoA hydratase/isomerase family. In the C-terminal section; belongs to the 3-hydroxyacyl-CoA dehydrogenase family. As to quaternary structure, heterotetramer of two alpha chains (FadB) and two beta chains (FadA).

The catalysed reaction is a (3S)-3-hydroxyacyl-CoA + NAD(+) = a 3-oxoacyl-CoA + NADH + H(+). The enzyme catalyses a (3S)-3-hydroxyacyl-CoA = a (2E)-enoyl-CoA + H2O. It catalyses the reaction a 4-saturated-(3S)-3-hydroxyacyl-CoA = a (3E)-enoyl-CoA + H2O. It carries out the reaction (3S)-3-hydroxybutanoyl-CoA = (3R)-3-hydroxybutanoyl-CoA. The catalysed reaction is a (3Z)-enoyl-CoA = a 4-saturated (2E)-enoyl-CoA. The enzyme catalyses a (3E)-enoyl-CoA = a 4-saturated (2E)-enoyl-CoA. It functions in the pathway lipid metabolism; fatty acid beta-oxidation. Functionally, involved in the aerobic and anaerobic degradation of long-chain fatty acids via beta-oxidation cycle. Catalyzes the formation of 3-oxoacyl-CoA from enoyl-CoA via L-3-hydroxyacyl-CoA. It can also use D-3-hydroxyacyl-CoA and cis-3-enoyl-CoA as substrate. In Escherichia coli O17:K52:H18 (strain UMN026 / ExPEC), this protein is Fatty acid oxidation complex subunit alpha.